We begin with the raw amino-acid sequence, 144 residues long: Granulocyte-macrophage colony-stimulating factor (144 aa).

A signal peptide spans 1–17 (MWLQNLLLLGTVVCSFS). S24 is a glycosylation site (O-linked (GalNAc...) serine). T27 carries an O-linked (GalNAc...) threonine glycan. N44 and N54 each carry an N-linked (GlcNAc...) asparagine glycan. Intrachain disulfides connect C71–C113 and C105–C138.

The protein belongs to the GM-CSF family. Monomer. The signaling GM-CSF receptor complex is a dodecamer of two head-to-head hexamers of two alpha, two beta, and two ligand subunits.

Its subcellular location is the secreted. Its function is as follows. Cytokine that stimulates the growth and differentiation of hematopoietic precursor cells from various lineages, including granulocytes, macrophages, eosinophils and erythrocytes. This is Granulocyte-macrophage colony-stimulating factor (CSF2) from Cervus elaphus (Red deer).